A 289-amino-acid polypeptide reads, in one-letter code: Urease accessory protein UreD (289 aa).

Belongs to the UreD family. As to quaternary structure, ureD, UreF and UreG form a complex that acts as a GTP-hydrolysis-dependent molecular chaperone, activating the urease apoprotein by helping to assemble the nickel containing metallocenter of UreC. The UreE protein probably delivers the nickel.

The protein resides in the cytoplasm. Required for maturation of urease via the functional incorporation of the urease nickel metallocenter. The chain is Urease accessory protein UreD from Cupriavidus necator (strain ATCC 17699 / DSM 428 / KCTC 22496 / NCIMB 10442 / H16 / Stanier 337) (Ralstonia eutropha).